A 950-amino-acid polypeptide reads, in one-letter code: Protein lin-54 homolog (950 aa).

Disordered stretches follow at residues 1–63 (MDTS…DSLN), 366–387 (NASA…TSSG), 500–523 (ASKP…PRKH), 533–552 (KQSA…GPEA), and 638–702 (VENK…LPPG). A compositionally biased stretch (acidic residues) spans 10 to 26 (SLDDTEPLPELSFEDFL). A compositionally biased stretch (basic and acidic residues) spans 29 to 39 (TSEKSSQHMEI). The span at 40 to 55 (EALDSEEDNIGGEDLA) shows a compositional bias: acidic residues. Low complexity-rich tracts occupy residues 366–386 (NASA…STSS), 500–516 (ASKP…PSAS), 535–548 (SASV…SSDA), and 661–682 (QQQS…QQQL). Positions 737–849 (RRKHCNCSKS…KCVGCRNMED (113 aa)) constitute a CRC domain.

The protein belongs to the lin-54 family. Component of the DREAM complex at least composed of Myb, Caf1-55, mip40, mip120, mip130, E2f2, Dp, Rbf, Rbf2, lin-52, HDAC1/Rpd3 and l(3)mbt.

It is found in the nucleus. Functionally, component of the DREAM complex, a multiprotein complex that can both act as a transcription activator or repressor depending on the context. In follicle cells, the complex plays a central role in the site-specific DNA replication at the chorion loci. During development, the complex represses transcription of developmentally controlled E2F target genes. In Drosophila melanogaster (Fruit fly), this protein is Protein lin-54 homolog (mip120).